The primary structure comprises 25 residues: FFGWLIRGAIHAGKAIHGLIHRRRH.

H25 is modified (histidine amide).

As to expression, gill.

It is found in the secreted. Functionally, has antibacterial activity against Gram-positive bacteria B.subtilis ATCC 6633, L.garvieae ATCC 49156 and S.iniae F-8502, and Gram-negative bacteria E.coli WT-2, V.anguillarum ATCC 19264, V.penaeicida KHA, V.harveyi ATCC 14126, V.vulnificus ATCC 33148 and A.salmonicida NCMB 1102. Has hemolytic activity against human red blood cells. Seems to disrupt the membranes by adopting an alpha helical conformation. May play a significant role in innate host defense. This chain is Chrysophsin-2, found in Pagrus major (Red sea bream).